Consider the following 552-residue polypeptide: Beta-hexosaminidase A (552 aa).

The N-terminal stretch at 1-15 (MRLIVLSLLFTSTLA) is a signal peptide. The N-linked (GlcNAc...) asparagine glycan is linked to asparagine 44. Glutamate 322 serves as the catalytic Proton donor. 3 N-linked (GlcNAc...) asparagine glycosylation sites follow: asparagine 348, asparagine 409, and asparagine 457.

Belongs to the glycosyl hydrolase 20 family.

The protein resides in the lysosome. It catalyses the reaction Hydrolysis of terminal non-reducing N-acetyl-D-hexosamine residues in N-acetyl-beta-D-hexosaminides.. Functionally, responsible for the degradation of GM2 gangliosides, and a variety of other molecules containing terminal N-acetyl hexosamines. Degrades chitotriose. In Caenorhabditis briggsae, this protein is Beta-hexosaminidase A.